Reading from the N-terminus, the 254-residue chain is MRKMFLAGNWKMHYTSVEAAGVAKQIVDGVQNINDDVVIMITPAFTSLCKVCEVTKGSNVLLGAQNMSYENSGARTSEISPSMLLEFGVDYVILGHSECRTYLGDTDEVINKKILAGLKHPFKYLILCIGETLSERENNKTLDVVLNQIRRGLMSVSESDLKRIILAYEPVWAIGTGKTATKEEAQEVHRAIRLEIESLYSTSAADDIIIQYGGSVNVDNVGGLMGENDIDGALIGGASLKADSFLNIVNKVAK.

Asn9–Lys11 is a binding site for substrate. The active-site Electrophile is His96. The active-site Proton acceptor is Glu169. Residues Gly175, Ser215, and Gly236 to Gly237 each bind substrate.

It belongs to the triosephosphate isomerase family. In terms of assembly, homodimer.

The protein localises to the cytoplasm. It catalyses the reaction D-glyceraldehyde 3-phosphate = dihydroxyacetone phosphate. Its pathway is carbohydrate biosynthesis; gluconeogenesis. It participates in carbohydrate degradation; glycolysis; D-glyceraldehyde 3-phosphate from glycerone phosphate: step 1/1. Involved in the gluconeogenesis. Catalyzes stereospecifically the conversion of dihydroxyacetone phosphate (DHAP) to D-glyceraldehyde-3-phosphate (G3P). The polypeptide is Triosephosphate isomerase (Borrelia hermsii (strain HS1 / DAH)).